The following is a 353-amino-acid chain: Transcription termination/antitermination protein NusG (353 aa).

The KOW domain occupies 301–335 (VGDMVKIISGPFEDFAGVIKEIDPERQELKVNVTI).

The protein belongs to the NusG family.

Its activity is regulated as follows. Regulated by autoinhibition via interaction of the N-terminal and the C-terminal domains. Autoinhibition may prevent NusG from interacting prematurely with other components of the transcription complex or non-specific interactions with other cellular components. In terms of biological role, participates in transcription elongation, termination and antitermination. This is Transcription termination/antitermination protein NusG from Thermotoga maritima (strain ATCC 43589 / DSM 3109 / JCM 10099 / NBRC 100826 / MSB8).